We begin with the raw amino-acid sequence, 1382 residues long: DNA-directed RNA polymerase subunit beta (1382 aa).

Belongs to the RNA polymerase beta chain family. As to quaternary structure, the RNAP catalytic core consists of 2 alpha, 1 beta, 1 beta' and 1 omega subunit. When a sigma factor is associated with the core the holoenzyme is formed, which can initiate transcription.

It catalyses the reaction RNA(n) + a ribonucleoside 5'-triphosphate = RNA(n+1) + diphosphate. DNA-dependent RNA polymerase catalyzes the transcription of DNA into RNA using the four ribonucleoside triphosphates as substrates. This Paracoccus denitrificans (strain Pd 1222) protein is DNA-directed RNA polymerase subunit beta.